Consider the following 333-residue polypeptide: Adenosine deaminase (333 aa).

His-12 and His-14 together coordinate Zn(2+). Substrate contacts are provided by His-14, Asp-16, and Gly-170. His-197 lines the Zn(2+) pocket. The Proton donor role is filled by Glu-200. Asp-278 provides a ligand contact to Zn(2+). Asp-279 contributes to the substrate binding site.

The protein belongs to the metallo-dependent hydrolases superfamily. Adenosine and AMP deaminases family. Adenosine deaminase subfamily. Requires Zn(2+) as cofactor.

It catalyses the reaction adenosine + H2O + H(+) = inosine + NH4(+). It carries out the reaction 2'-deoxyadenosine + H2O + H(+) = 2'-deoxyinosine + NH4(+). In terms of biological role, catalyzes the hydrolytic deamination of adenosine and 2-deoxyadenosine. The chain is Adenosine deaminase from Photorhabdus laumondii subsp. laumondii (strain DSM 15139 / CIP 105565 / TT01) (Photorhabdus luminescens subsp. laumondii).